Here is a 323-residue protein sequence, read N- to C-terminus: PTS system mannose-specific EIIAB component (323 aa).

Positions 2 to 124 (TIAIVIGTHG…VALAVETGRE (123 aa)) constitute a PTS EIIA type-4 domain. Histidine 10 serves as the catalytic Tele-phosphohistidine intermediate; for EIIA activity. Histidine 10 carries the post-translational modification Phosphohistidine; by HPr. Lysine 55 is subject to N6-acetyllysine. Positions 137-155 (AAPAPAAAAPKAAPTPAKP) are hinge. Residues 157-320 (GPNDYMVIGL…KLKMMDLISK (164 aa)) form the PTS EIIB type-4 domain. Histidine 175 acts as the Pros-phosphohistidine intermediate; for EIIB activity in catalysis. Histidine 175 carries the post-translational modification Phosphohistidine; by EIIA. Position 234 is an N6-acetyllysine (lysine 234).

In terms of assembly, homodimer.

Its subcellular location is the cytoplasm. The protein resides in the cell inner membrane. The enzyme catalyses D-mannose(out) + N(pros)-phospho-L-histidyl-[protein] = D-mannose 6-phosphate(in) + L-histidyl-[protein]. Functionally, the phosphoenolpyruvate-dependent sugar phosphotransferase system (sugar PTS), a major carbohydrate active transport system, catalyzes the phosphorylation of incoming sugar substrates concomitantly with their translocation across the cell membrane. The enzyme II ManXYZ PTS system is involved in mannose transport. The protein is PTS system mannose-specific EIIAB component (manX) of Escherichia coli O157:H7.